The chain runs to 292 residues: MKNRIPLNALRAFEASARYLNFTKAGLELHVSQAAVSQHVRTLEAILGVNLFKRLPRGLQLTEEGLHLLPMINEAFSIMGSALERFHEGKIREVITVAVVGTFAVGWLLPRLSGFTKSYPWIDIRVITHNNVINLAAEGIDAAIRFGHGFWQSTENYKLFSAPHTVLCPPNVAKKLTTPEDMKDYRLLRTYRKEEWSSWFKAANLKPWPVTGPIFDSSRHMDDAAKICGDIALAPYKMFIHEIENGSLVKPFDIEVHLGGYWLTILKSRSNIELNNALNIFKTWLLNASHSI.

An HTH lysR-type domain is found at 5 to 62; that stretch reads IPLNALRAFEASARYLNFTKAGLELHVSQAAVSQHVRTLEAILGVNLFKRLPRGLQLT. Residues 22–41 constitute a DNA-binding region (H-T-H motif); that stretch reads FTKAGLELHVSQAAVSQHVR.

This sequence belongs to the LysR transcriptional regulatory family.

This protein is a positive regulator of gene expression of carbapenem-hydrolyzing beta-lactamase (smeA). Seems to also be a repressor of its own transcription. The sequence is that of Carbapenem-hydrolyzing beta-lactamase transcriptional activator (smeR) from Serratia marcescens.